Here is a 204-residue protein sequence, read N- to C-terminus: Methylthioribulose-1-phosphate dehydratase (204 aa).

The Zn(2+) site is built by H94 and H96.

This sequence belongs to the aldolase class II family. MtnB subfamily. Zn(2+) serves as cofactor.

The catalysed reaction is 5-(methylsulfanyl)-D-ribulose 1-phosphate = 5-methylsulfanyl-2,3-dioxopentyl phosphate + H2O. It participates in amino-acid biosynthesis; L-methionine biosynthesis via salvage pathway; L-methionine from S-methyl-5-thio-alpha-D-ribose 1-phosphate: step 2/6. Its function is as follows. Catalyzes the dehydration of methylthioribulose-1-phosphate (MTRu-1-P) into 2,3-diketo-5-methylthiopentyl-1-phosphate (DK-MTP-1-P). The polypeptide is Methylthioribulose-1-phosphate dehydratase (Pseudomonas syringae pv. syringae (strain B728a)).